Here is a 415-residue protein sequence, read N- to C-terminus: Histidine--tRNA ligase (415 aa).

This sequence belongs to the class-II aminoacyl-tRNA synthetase family. Homodimer.

Its subcellular location is the cytoplasm. The enzyme catalyses tRNA(His) + L-histidine + ATP = L-histidyl-tRNA(His) + AMP + diphosphate + H(+). In Clostridium perfringens (strain SM101 / Type A), this protein is Histidine--tRNA ligase.